The sequence spans 497 residues: Dol-P-Man:Man(7)GlcNAc(2)-PP-Dol alpha-1,6-mannosyltransferase (497 aa).

The next 7 helical transmembrane spans lie at 10–30 (FLQSYGYDLILGSVAAIYVVM), 71–91 (FIGAFIVSVFASPVVSIISCL), 92–112 (GFPKVYSLVAARLVLGCIILS), 125–145 (FGNQVETFFVLFTSLQFHFLF), 154–174 (ILALGLVNLAYGNWLKGNFYP), 178–198 (FLIFATVIFRCDTMLLLGPIG), and 215–235 (YCVGTALLAVGLTIFVDSIMW). An N-linked (GlcNAc...) asparagine glycan is attached at Asn253. A run of 4 helical transmembrane segments spans residues 263-285 (IHWYFTSALPRSLLVAYPLSLLG), 292-312 (VPFFIVPVLSFVILYSKLPHK), 316-336 (FIISSVPMFNLSAAVAASRIY), and 346-366 (LVNMVMLAFFAISAGCTVVTF). Asn435 carries an N-linked (GlcNAc...) asparagine glycan.

Belongs to the glycosyltransferase 22 family.

The protein resides in the endoplasmic reticulum membrane. It carries out the reaction an alpha-D-Man-(1-&gt;2)-alpha-D-Man-(1-&gt;2)-alpha-D-Man-(1-&gt;3)-[alpha-D-Man-(1-&gt;2)-alpha-D-Man-(1-&gt;3)-alpha-D-Man-(1-&gt;6)]-beta-D-Man-(1-&gt;4)-beta-D-GlcNAc-(1-&gt;4)-alpha-D-GlcNAc-diphospho-di-trans,poly-cis-dolichol + a di-trans,poly-cis-dolichyl beta-D-mannosyl phosphate = an alpha-D-Man-(1-&gt;2)-alpha-D-Man-(1-&gt;2)-alpha-D-Man-(1-&gt;3)-[alpha-D-Man-(1-&gt;2)-alpha-D-Man-(1-&gt;3)-[alpha-D-Man-(1-&gt;6)]-alpha-D-Man-(1-&gt;6)]-beta-D-Man-(1-&gt;4)-beta-D-GlcNAc-(1-&gt;4)-alpha-D-GlcNAc-diphospho-di-trans,poly-cis-dolichol + a di-trans,poly-cis-dolichyl phosphate + H(+). It functions in the pathway protein modification; protein glycosylation. In terms of biological role, mannosyltransferase that operates in the biosynthetic pathway of dolichol-linked oligosaccharides, the glycan precursors employed in protein asparagine (N)-glycosylation. The assembly of dolichol-linked oligosaccharides begins on the cytosolic side of the endoplasmic reticulum membrane and finishes in its lumen. The sequential addition of sugars to dolichol pyrophosphate produces dolichol-linked oligosaccharides containing fourteen sugars, including two GlcNAcs, nine mannoses and three glucoses. Once assembled, the oligosaccharide is transferred from the lipid to nascent proteins by oligosaccharyltransferases. In the lumen of the endoplasmic reticulum, adds the eighth mannose residue in an alpha-1,6 linkage onto Man(7)GlcNAc(2)-PP-dolichol to produce Man(8)GlcNAc(2)-PP-dolichol. The polypeptide is Dol-P-Man:Man(7)GlcNAc(2)-PP-Dol alpha-1,6-mannosyltransferase (ALG12) (Arabidopsis thaliana (Mouse-ear cress)).